A 366-amino-acid polypeptide reads, in one-letter code: DNA replication and repair protein RecF (366 aa).

ATP is bound at residue G30–T37.

This sequence belongs to the RecF family.

Its subcellular location is the cytoplasm. Functionally, the RecF protein is involved in DNA metabolism; it is required for DNA replication and normal SOS inducibility. RecF binds preferentially to single-stranded, linear DNA. It also seems to bind ATP. This is DNA replication and repair protein RecF from Streptococcus thermophilus (strain ATCC BAA-250 / LMG 18311).